Consider the following 620-residue polypeptide: MLPVLYTGLAGLLLLPLLLTCCCPYLLQDVRFFLQLANMARQVRSYRQRRPVRTILHVFLEQARKTPHKPFLLFRDETLTYAQVDRRSNQVARALHDHLGLRQGDCVALFMGNEPAYVWLWLGLLKLGCPMACLNYNIRAKSLLHCFQCCGAKVLLASPELHEAVEEVLPTLKKEGVSVFYVSRTSNTNGVDTVLDKVDGVSADPIPESWRSEVTFTTPAVYIYTSGTTGLPKAATINHHRLWYGTSLALRSGIKAHDVIYTTMPLYHSAALMIGLHGCIVVGATFALRSKFSASQFWDDCRKYNATVIQYIGELLRYLCNTPQKPNDRDHKVKIALGNGLRGDVWREFIKRFGDIHIYEFYASTEGNIGFMNYPRKIGAVGRENYLQKKVVRHELIKYDVEKDEPVRDANGYCIKVPKGEVGLLICKITELTPFFGYAGGKTQTEKKKLRDVFKKGDVYFNSGDLLMIDRENFIYFHDRVGDTFRWKGENVATTEVADIVGLVDFVEEVNVYGVPVPGHEGRIGMASIKMKENYEFNGKKLFQHISEYLPSYSRPRFLRIQDTIEITGTFKHRKVTLMEEGFNPSVIKDTLYFMDDTEKTYVPMTEDIYNAIIDKTLKL.

At M1–V4 the chain is on the lumenal side. The chain crosses the membrane as a helical span at residues L5–L27. Residues Q28–C106 are Cytoplasmic-facing. Residues V107 to L127 form a helical membrane-spanning segment. At G128–Y267 the chain is on the lumenal side. Y222–K233 serves as a coordination point for AMP. Residues H268–L288 traverse the membrane as a helical segment. Topologically, residues R289–L620 are cytoplasmic. An N6-acetyllysine modification is found at K291. The residue at position 577 (T577) is a Phosphothreonine.

It belongs to the ATP-dependent AMP-binding enzyme family. In terms of tissue distribution, liver and kidney (at protein level).

It is found in the endoplasmic reticulum membrane. It localises to the peroxisome membrane. The protein localises to the cell membrane. The protein resides in the microsome. The catalysed reaction is a fatty acid(in) = a fatty acid(out). It carries out the reaction (9Z)-octadecenoate(out) = (9Z)-octadecenoate(in). It catalyses the reaction a long-chain fatty acid + ATP + CoA = a long-chain fatty acyl-CoA + AMP + diphosphate. The enzyme catalyses (5Z,8Z,11Z,14Z)-eicosatetraenoate + ATP + CoA = (5Z,8Z,11Z,14Z)-eicosatetraenoyl-CoA + AMP + diphosphate. The catalysed reaction is (9Z,12Z,15Z)-octadecatrienoate + ATP + CoA = (9Z,12Z,15Z)-octadecatrienoyl-CoA + AMP + diphosphate. It carries out the reaction hexadecanoate + ATP + CoA = hexadecanoyl-CoA + AMP + diphosphate. It catalyses the reaction (9Z)-octadecenoate + ATP + CoA = (9Z)-octadecenoyl-CoA + AMP + diphosphate. The enzyme catalyses 2,6,10,14-tetramethylpentadecanoate + ATP + CoA = pristanoyl-CoA + AMP + diphosphate. The catalysed reaction is (E)-hexadec-2-enoate + ATP + CoA = (2E)-hexadecenoyl-CoA + AMP + diphosphate. It carries out the reaction 3,7,11,15-tetramethylhexadecanoate + ATP + CoA = phytanoyl-CoA + AMP + diphosphate. It catalyses the reaction a very long-chain fatty acid + ATP + CoA = a very long-chain fatty acyl-CoA + AMP + diphosphate. The enzyme catalyses tetracosanoate + ATP + CoA = tetracosanoyl-CoA + AMP + diphosphate. The catalysed reaction is (4Z,7Z,10Z,13Z,16Z,19Z)-docosahexaenoate + ATP + CoA = (4Z,7Z,10Z,13Z,16Z,19Z)-docosahexaenoyl-CoA + AMP + diphosphate. It carries out the reaction (25R)-3alpha,7alpha,12alpha-trihydroxy-5beta-cholestan-26-oate + ATP + CoA = (25R)-3alpha,7alpha,12alpha-trihydroxy-5beta-cholestan-26-oyl-CoA + AMP + diphosphate. In terms of biological role, mediates the import of long-chain fatty acids (LCFA) into the cell by facilitating their transport across cell membranes, playing an important role in hepatic fatty acid uptake. Also functions as an acyl-CoA ligase catalyzing the ATP-dependent formation of fatty acyl-CoA using LCFA and very-long-chain fatty acids (VLCFA) as substrates, which prevents fatty acid efflux from cells and might drive more fatty acid uptake. Plays a pivotal role in regulating available LCFA substrates from exogenous sources in tissues undergoing high levels of beta-oxidation or triglyceride synthesis. Can also activate branched-chain fatty acids such as phytanic acid and pristanic acid. May contribute to the synthesis of sphingosine-1-phosphate. Does not activate C24 bile acids, cholate and chenodeoxycholate. In vitro, activates 3-alpha,7-alpha,12-alpha-trihydroxy-5-beta-cholestanate (THCA), the C27 precursor of cholic acid deriving from the de novo synthesis from cholesterol. However, it is not critical for THCA activation and bile synthesis in vivo. This chain is Long-chain fatty acid transport protein 2 (Slc27a2), found in Rattus norvegicus (Rat).